Here is a 1075-residue protein sequence, read N- to C-terminus: Paired amphipathic helix protein pst2 (1075 aa).

PAH domains follow at residues 28–102, 138–208, and 243–319; these read SPNG…LPSS, LPCT…LPSS, and RPDN…TSLS. Ser641 and Ser643 each carry phosphoserine. A disordered region spans residues 647-700; the sequence is LTEFVKQPKINGQRESRSAAAARKKEESGNKSQSNSQNSLSDESGNVTPVSKKQ. The span at 658–675 shows a compositional bias: basic and acidic residues; the sequence is GQRESRSAAAARKKEESG. Over residues 676–691 the composition is skewed to low complexity; sequence NKSQSNSQNSLSDESG.

In terms of assembly, heterotetramer of alp13, clr6, prw1 and pst2.

It localises to the nucleus. Functionally, has a role in chromatin assembly and chromosome segregation. Involved in the deacetylation of histones. The chain is Paired amphipathic helix protein pst2 (pst2) from Schizosaccharomyces pombe (strain 972 / ATCC 24843) (Fission yeast).